A 331-amino-acid chain; its full sequence is Mucin-15 (331 aa).

The signal sequence occupies residues 1–22; it reads MLTLAKIALISSLFISLPFARP. At 23–233 the chain is on the extracellular side; sequence QKQNPRRNVT…SDTPKENKNT (211 aa). 12 N-linked (GlcNAc...) asparagine glycosylation sites follow: Asn-30, Asn-44, Asn-54, Asn-59, Asn-75, Asn-84, Asn-120, Asn-136, Asn-145, Asn-152, Asn-215, and Asn-222. A compositionally biased stretch (polar residues) spans 124-162; it reads ADANPLQVSEHSNSTNSPSPENFTWSLDNDTMNSPEDIS. The tract at residues 124–186 is disordered; it reads ADANPLQVSE…VTPFTAEPTE (63 aa). Residues 234 to 254 form a helical membrane-spanning segment; the sequence is GIVFGAILGAILGASLLSLVG. Topologically, residues 255 to 331 are cytoplasmic; it reads YLLCGQRKTD…DAIPPLRPSI (77 aa). The interval 302–331 is disordered; the sequence is AVSDSSMPEGGESLQDGIPMDAIPPLRPSI.

Post-translationally, highly glycosylated (N- and O-linked carbohydrates).

It localises to the membrane. The polypeptide is Mucin-15 (Muc15) (Mus musculus (Mouse)).